The primary structure comprises 794 residues: Interphotoreceptor matrix proteoglycan 1 (794 aa).

The first 20 residues, 1–20, serve as a signal peptide directing secretion; sequence MHLEAARVIFFLWIFLQVQG. Positions 202–213 are enriched in polar residues; sequence MTTAQRNPQLHP. Disordered stretches follow at residues 202-221, 314-355, and 413-449; these read MTTA…RVPT, KGKA…LYPT, and SPEL…AMTS. Residues 236–357 enclose the SEA 1 domain; it reads LEQKVELSIS…KQRELYPTAS (122 aa). Residues 332–351 show a composition bias toward basic and acidic residues; the sequence is NKIESEGDPRGTTEEEKQRE. O-linked (GalNAc...) threonine glycosylation is found at Thr-425 and Thr-439. Ser-443 is a glycosylation site (O-linked (GalNAc...) serine). Residues Thr-448 and Thr-450 are each glycosylated (O-linked (GalNAc...) threonine). One can recognise an SEA 2 domain in the interval 579–692; it reads RELVVFFSLR…YSLDVEPADQ (114 aa). Asn-624 carries an N-linked (GlcNAc...) asparagine glycan. The short motif at 629-637 is the Heparin- and hyaluronan-binding element; sequence KQLEILNFR. Asn-656 carries N-linked (GlcNAc...) asparagine glycosylation.

Post-translationally, highly glycosylated (N- and O-linked carbohydrates and sialic acid).

It localises to the cell projection. It is found in the cilium. The protein resides in the photoreceptor outer segment. Its subcellular location is the secreted. The protein localises to the extracellular space. It localises to the extracellular matrix. It is found in the interphotoreceptor matrix. The protein resides in the photoreceptor inner segment. Its function is as follows. Chondroitin sulfate-, heparin- and hyaluronan-binding protein. May serve to form a basic macromolecular scaffold comprising the insoluble interphotoreceptor matrix. In Bos taurus (Bovine), this protein is Interphotoreceptor matrix proteoglycan 1 (IMPG1).